The following is a 689-amino-acid chain: Beta-adrenergic receptor kinase 1 (689 aa).

The N-terminal stretch occupies residues 1-190; sequence MADLEAVLAD…ELNIHLTMND (190 aa). In terms of domain architecture, RGS spans 54 to 175; the sequence is TFEKIFSQKL…IESDKFTRFC (122 aa). The 263-residue stretch at 191-453 folds into the Protein kinase domain; the sequence is FSVHRIIGRG…AQEIKESPFF (263 aa). Residues 197–205 and Lys-220 contribute to the ATP site; that span reads IGRGGFGEV. The active-site Proton acceptor is the Asp-317. Positions 454-521 constitute an AGC-kinase C-terminal domain; sequence RSLDWQMVFL…TISERWQQEV (68 aa). The PH domain maps to 558-652; it reads DCIMHGYMSK…WKKELRDAYR (95 aa). The residue at position 670 (Ser-670) is a Phosphoserine.

The protein belongs to the protein kinase superfamily. AGC Ser/Thr protein kinase family. GPRK subfamily. As to quaternary structure, interacts with the heterodimer formed by GNB1 and GNG2. Interacts with GIT1. Interacts with, and phosphorylates chemokine-stimulated CCR5. Interacts with ARRB1. Interacts with LPAR1 and LPAR2. Interacts with RALA in response to LPAR1 activation. ADRBK1 and RALA mutually inhibit each other's binding to LPAR1. Interacts with ADRB2. Expressed at low levels in brain cortex, hippocampus, striatum, hypothalamus, cerebellum and brainstem (at protein level).

The protein resides in the cytoplasm. It is found in the cell membrane. Its subcellular location is the postsynapse. It localises to the presynapse. The enzyme catalyses [beta-adrenergic receptor] + ATP = [beta-adrenergic receptor]-phosphate + ADP + H(+). In contrast to other AGC family kinases, the catalytic activity is solely regulated by the binding of substrates and ligands, not by phosphorylation of the kinase domain. Specifically phosphorylates the agonist-occupied form of the beta-adrenergic and closely related receptors, probably inducing a desensitization of them. Key regulator of LPAR1 signaling. Competes with RALA for binding to LPAR1 thus affecting the signaling properties of the receptor. Desensitizes LPAR1 and LPAR2 in a phosphorylation-independent manner. Positively regulates ciliary smoothened (SMO)-dependent Hedgehog (Hh) signaling pathway by facilitating the trafficking of SMO into the cilium and the stimulation of SMO activity. Inhibits relaxation of airway smooth muscle in response to blue light. The sequence is that of Beta-adrenergic receptor kinase 1 from Rattus norvegicus (Rat).